The primary structure comprises 280 residues: Dual adapter for phosphotyrosine and 3-phosphotyrosine and 3-phosphoinositide (280 aa).

Positions 35–129 constitute an SH2 domain; that stretch reads WYHGNLTRHA…GTLMVLKHPY (95 aa). The residue at position 139 (Y139) is a Phosphotyrosine. At S141 the chain carries Phosphoserine. Positions 164–259 constitute a PH domain; the sequence is LGTKEGYLTK…WIKILRWKLS (96 aa).

As to quaternary structure, interacts with PtdIns(3,4,5)P3 and PLCG2. In terms of processing, phosphorylated on tyrosine residues.

The protein resides in the cytoplasm. Its subcellular location is the membrane. May act as a B-cell-associated adapter that regulates B-cell antigen receptor (BCR)-signaling downstream of PI3K. In Mus musculus (Mouse), this protein is Dual adapter for phosphotyrosine and 3-phosphotyrosine and 3-phosphoinositide (Dapp1).